A 1484-amino-acid chain; its full sequence is Glutamate receptor ionotropic, NMDA 2B (1484 aa).

A signal peptide spans 1–26; it reads MKPRAECCSPKFWLVLAVLAVSGSRA. Residues 27–555 lie on the Extracellular side of the membrane; that stretch reads RSQKSPPSIG…SPSAFLEPFS (529 aa). N74 carries an N-linked (GlcNAc...) asparagine glycan. C86 and C321 form a disulfide bridge. Positions 127 and 284 each coordinate Zn(2+). Residues N341, N348, N444, and N491 are each glycosylated (N-linked (GlcNAc...) asparagine). Disulfide bonds link C429/C456 and C436/C457. Residues T514 and R519 each coordinate L-glutamate. Residue N542 is glycosylated (N-linked (GlcNAc...) asparagine). The helical transmembrane segment at 556–576 threads the bilayer; sequence ADVWVMMFVMLLIVSAVAVFV. The Cytoplasmic portion of the chain corresponds to 577-601; the sequence is FEYFSPVGYNRCLADGREPGGPSFT. Residues 602 to 613 constitute an intramembrane region (discontinuously helical); it reads IGKAIWLLWGLV. The interval 604–623 is pore-forming; it reads KAIWLLWGLVFNNSVPVQNP. The Cytoplasmic portion of the chain corresponds to 614 to 627; it reads FNNSVPVQNPKGTT. A helical membrane pass occupies residues 628 to 647; that stretch reads SKIMVSVWAFFAVIFLASYT. At 648-819 the chain is on the extracellular side; sequence ANLAAFMIQE…SSQLDIDNMA (172 aa). Residue N688 is glycosylated (N-linked (GlcNAc...) asparagine). Residues 690 to 691 and D732 each bind L-glutamate; that span reads ST. Residues 820–835 traverse the membrane as a helical segment; the sequence is GVFYMLGAAMALSLIT. Residues 836 to 1484 are Cytoplasmic-facing; that stretch reads FICEHLFYWQ…EKLSSIESDV (649 aa). Residues S882, S886, S917, and S920 each carry the phosphoserine modification. 2 positions are modified to phosphotyrosine: Y962 and Y1039. Residues S1058, S1061, and S1064 each carry the phosphoserine modification. The segment at 1074-1097 is disordered; the sequence is EGNAAKRRKQQYKDSLKKRPASAK. A phosphotyrosine mark is found at Y1109 and Y1133. The residue at position 1143 (S1143) is a Phosphoserine. Residue Y1155 is modified to Phosphotyrosine. A disordered region spans residues 1161 to 1194; it reads DFKRDSVSGGGPCTNRSHIKHGTGDKHGVVSGVP. S1255 and S1259 each carry phosphoserine. The segment at 1271–1301 is disordered; that stretch reads AVTSNASTTKYPQSPTNSKAQKKNRNKLRRQ. Polar residues predominate over residues 1272 to 1289; the sequence is VTSNASTTKYPQSPTNSK. Over residues 1290-1301 the composition is skewed to basic residues; it reads AQKKNRNKLRRQ. An interaction with DAPK1 region spans residues 1292-1304; it reads KKNRNKLRRQHSY. S1303 is modified (phosphoserine; by DAPK1). The residue at position 1474 (Y1474) is a Phosphotyrosine. The short motif at 1482–1484 is the PDZ-binding element; that stretch reads SDV.

The protein belongs to the glutamate-gated ion channel (TC 1.A.10.1) family. NR2B/GRIN2B subfamily. In terms of assembly, heterotetramer. Forms heterotetrameric channels composed of two GluN1/zeta subunits (GRIN1), and two identical GluN2/epsilon subunits (GRIN2A, GRIN2B, GRIN2C or GRIN2D) or GluN3 subunits (GRIN3A or GRIN3B) (in vitro). Can also form heterotetrameric channels that contain at least two GluN1 subunits and at least two different GluN2 subunits (or a combination of one GluN2 and one GluN3 subunits) (in vitro). In vivo, the subunit composition may depend on the expression levels of the different subunits. Found in a complex with GRIN1 and GRIN3B. Found in a complex with GRIN1, GRIN3A and PPP2CB. Interacts with PDZ domains of PATJ, DLG3 and DLG4. Interacts with HIP1 and NETO1. Interacts with MAGI3. Interacts with DAPK1. Found in a complex with GRIN1 and PRR7. Interacts with PRR7. Interacts with CAMK2A. Interacts with ARC; preventing ARC oligomerization. Interacts with TMEM25. Interacts (via the extreme C-terminus) with FRMPD2 (via the second PDZ domain); the interaction is direct and is likely to promote NMDAR-mediated neural signal transmission. Interacts with FAM81A; the interaction facilitates condensate formation via liquid-liquid phase separation. In terms of processing, phosphorylated on tyrosine residues. Phosphorylation at Ser-1303 by DAPK1 enhances synaptic NMDA receptor channel activity. Primarily found in the fronto-parieto-temporal cortex and hippocampus pyramidal cells, lower expression in the basal ganglia.

It localises to the cell membrane. Its subcellular location is the postsynaptic cell membrane. The protein resides in the cell projection. The protein localises to the dendrite. It is found in the late endosome. It localises to the lysosome. Its subcellular location is the cytoplasm. The protein resides in the cytoskeleton. It carries out the reaction Ca(2+)(in) = Ca(2+)(out). The enzyme catalyses Na(+)(in) = Na(+)(out). The catalysed reaction is K(+)(in) = K(+)(out). Component of N-methyl-D-aspartate (NMDA) receptors (NMDARs) that function as heterotetrameric, ligand-gated cation channels with high calcium permeability and voltage-dependent block by Mg(2+). Participates in synaptic plasticity for learning and memory formation by contributing to the long-term depression (LTD) of hippocampus membrane currents. Channel activation requires binding of the neurotransmitter L-glutamate to the GluN2 subunit, glycine or D-serine binding to the GluN1 subunit, plus membrane depolarization to eliminate channel inhibition by Mg(2+). NMDARs mediate simultaneously the potasium efflux and the influx of calcium and sodium. Each GluN2 subunit confers differential attributes to channel properties, including activation, deactivation and desensitization kinetics, pH sensitivity, Ca2(+) permeability, and binding to allosteric modulators. In concert with DAPK1 at extrasynaptic sites, acts as a central mediator for stroke damage. Its phosphorylation at Ser-1303 by DAPK1 enhances synaptic NMDA receptor channel activity inducing injurious Ca2+ influx through them, resulting in an irreversible neuronal death. The chain is Glutamate receptor ionotropic, NMDA 2B from Homo sapiens (Human).